Here is a 494-residue protein sequence, read N- to C-terminus: UDP-N-acetylmuramate--L-alanine ligase (494 aa).

ATP is bound at residue 122-128 (GTHGKTT).

Belongs to the MurCDEF family.

It is found in the cytoplasm. The catalysed reaction is UDP-N-acetyl-alpha-D-muramate + L-alanine + ATP = UDP-N-acetyl-alpha-D-muramoyl-L-alanine + ADP + phosphate + H(+). It participates in cell wall biogenesis; peptidoglycan biosynthesis. Cell wall formation. In Mycobacterium bovis (strain ATCC BAA-935 / AF2122/97), this protein is UDP-N-acetylmuramate--L-alanine ligase.